Reading from the N-terminus, the 468-residue chain is Tyramine receptor tyra-2 (468 aa).

The Extracellular portion of the chain corresponds to 1–23 (MMSSYVMSPVDETYTLFQILKGS). A helical transmembrane segment spans residues 24–43 (ALFLLVLWTIFANSLVFIVL). Residues 44-54 (YKNPRLQTVPN) are Cytoplasmic-facing. The helical transmembrane segment at 55–77 (LLVGNLAFSDLALGLIVLPLSSV) threads the bilayer. At 78–91 (YAIAGEWVFPDALC) the chain is on the extracellular side. Cysteines 91 and 177 form a disulfide. A helical membrane pass occupies residues 92–114 (EVFVSADILCSTASIWNLSIVGL). The Cytoplasmic portion of the chain corresponds to 115 to 134 (DRYWAITSPVAYMSKRNKRT). Residues 135–157 (AGIMILSVWISSALISLAPLLGW) traverse the membrane as a helical segment. Residues 158–186 (KQTAQTPNLIYEKNNTVRQCTFLDLPSYT) lie on the Extracellular side of the membrane. A glycan (N-linked (GlcNAc...) asparagine) is linked at Asn171. Residues 187–209 (VYSATGSFFIPTLLMFFVYFKIY) form a helical membrane-spanning segment. Topologically, residues 210–387 (QAFAKHRARQ…SAAKERRGVK (178 aa)) are cytoplasmic. The interval 252-306 (DEFAKEEEEEEDSESSGQVENGLGNGNDAIIEEDECEDEDSDEKRDDHTSMTTVT) is disordered. Composition is skewed to acidic residues over residues 255–265 (AKEEEEEEDSE) and 281–292 (IIEEDECEDEDS). Residues 388 to 410 (VLGIILGCFTVCWAPFFTMYVLV) traverse the membrane as a helical segment. The Extracellular portion of the chain corresponds to 411 to 424 (QFCKDCSPNAHIEM). The helical transmembrane segment at 425–444 (FITWLGYSNSAMNPIIYTVF) threads the bilayer. Residues 445–468 (NRDYQIALKRLFTSEKKPSSTSRV) lie on the Cytoplasmic side of the membrane.

Belongs to the G-protein coupled receptor 1 family. In terms of tissue distribution, expressed in the pharyngeal neurons, MCL/R and NSML/R and the AS group of amphidial sensory neurons, ASEL/R, AGSL/R, ASHL/R and ASIL/R.

The protein resides in the cell membrane. Its function is as follows. G-protein coupled receptor for tyramine, a known neurotransmitter and neuromodulator and direct precursor of octopamine. Expression in amphidial sensory neurons suggests a role in chemosensation. The protein is Tyramine receptor tyra-2 (tyra-2) of Caenorhabditis elegans.